The following is a 118-amino-acid chain: UPF0344 protein BLi01172/BL01343 (118 aa).

Helical transmembrane passes span 6 to 26 (ITSWVIALILVFVAYGLYSSG), 33 to 53 (ITHMILRLFYIIVIITGAQLF), 62 to 82 (EYIAKALLGLITIGFMEMLLI), and 89 to 109 (AATGIWIGFIVVLLLTVVLGL).

Belongs to the UPF0344 family.

The protein localises to the cell membrane. The chain is UPF0344 protein BLi01172/BL01343 from Bacillus licheniformis (strain ATCC 14580 / DSM 13 / JCM 2505 / CCUG 7422 / NBRC 12200 / NCIMB 9375 / NCTC 10341 / NRRL NRS-1264 / Gibson 46).